Consider the following 293-residue polypeptide: D-alanine--D-alanine ligase (293 aa).

Residues 98-291 (KIIWEQHSLT…FNKLVTSIIN (194 aa)) form the ATP-grasp domain. ATP is bound at residue 124–177 (NFPLPWAVKPTLEGSSIGISKVDNQMQLNDALMLAWQYAPYALIEQWIKGDEYT). Mg(2+) contacts are provided by D245, E258, and N260.

It belongs to the D-alanine--D-alanine ligase family. The cofactor is Mg(2+). It depends on Mn(2+) as a cofactor.

It is found in the cytoplasm. The catalysed reaction is 2 D-alanine + ATP = D-alanyl-D-alanine + ADP + phosphate + H(+). It functions in the pathway cell wall biogenesis; peptidoglycan biosynthesis. In terms of biological role, cell wall formation. The protein is D-alanine--D-alanine ligase of Vesicomyosocius okutanii subsp. Calyptogena okutanii (strain HA).